The sequence spans 300 residues: uncharacterized protein (300 aa).

A compositionally biased stretch (basic and acidic residues) spans 1–19 (MATKRAHPEDETHESKRAA). The tract at residues 1–20 (MATKRAHPEDETHESKRAAQ) is disordered.

This is an uncharacterized protein from Orgyia pseudotsugata multicapsid polyhedrosis virus (OpMNPV).